A 253-amino-acid chain; its full sequence is DNA repair protein RecO (253 aa).

Belongs to the RecO family.

In terms of biological role, involved in DNA repair and RecF pathway recombination. This Nitrobacter hamburgensis (strain DSM 10229 / NCIMB 13809 / X14) protein is DNA repair protein RecO.